The primary structure comprises 247 residues: Phosphatidylserine decarboxylase proenzyme (247 aa).

S206 (schiff-base intermediate with substrate; via pyruvic acid) is an active-site residue. S206 bears the Pyruvic acid (Ser); by autocatalysis mark.

It belongs to the phosphatidylserine decarboxylase family. PSD-A subfamily. Heterodimer of a large membrane-associated beta subunit and a small pyruvoyl-containing alpha subunit. Pyruvate serves as cofactor. Post-translationally, is synthesized initially as an inactive proenzyme. Formation of the active enzyme involves a self-maturation process in which the active site pyruvoyl group is generated from an internal serine residue via an autocatalytic post-translational modification. Two non-identical subunits are generated from the proenzyme in this reaction, and the pyruvate is formed at the N-terminus of the alpha chain, which is derived from the carboxyl end of the proenzyme. The post-translation cleavage follows an unusual pathway, termed non-hydrolytic serinolysis, in which the side chain hydroxyl group of the serine supplies its oxygen atom to form the C-terminus of the beta chain, while the remainder of the serine residue undergoes an oxidative deamination to produce ammonia and the pyruvoyl prosthetic group on the alpha chain.

The protein localises to the cell membrane. The enzyme catalyses a 1,2-diacyl-sn-glycero-3-phospho-L-serine + H(+) = a 1,2-diacyl-sn-glycero-3-phosphoethanolamine + CO2. It participates in phospholipid metabolism; phosphatidylethanolamine biosynthesis; phosphatidylethanolamine from CDP-diacylglycerol: step 2/2. Functionally, catalyzes the formation of phosphatidylethanolamine (PtdEtn) from phosphatidylserine (PtdSer). In Nitrobacter winogradskyi (strain ATCC 25391 / DSM 10237 / CIP 104748 / NCIMB 11846 / Nb-255), this protein is Phosphatidylserine decarboxylase proenzyme.